A 55-amino-acid polypeptide reads, in one-letter code: Large ribosomal subunit protein bL33 (55 aa).

Belongs to the bacterial ribosomal protein bL33 family.

The chain is Large ribosomal subunit protein bL33 from Rhodopseudomonas palustris (strain HaA2).